A 504-amino-acid chain; its full sequence is Probable ergothioneine transporter EgtUBC (504 aa).

The ABC transmembrane type-1 domain maps to 19–198 (MIEHIQISFI…LLAIIFDLIL (180 aa)). The next 6 membrane-spanning stretches (helical) occupy residues 25–45 (ISFIALLIATAIAVPLGILLT), 49–69 (TISEIVMNIAAILQTIPSLAL), 70–90 (LGLMIPLFGIGRVPAIIALVV), 145–165 (AMVLIIGTATLAALIGAGGLG), 178–198 (SLILLGAIPAALLAIIFDLIL), and 209–229 (LLMTLGVIVMIIILAIAIPMF). Positions 231–504 (QKGDKITLAG…DYLKAKGLIK (274 aa)) are ergothioneine binding domain.

The protein in the N-terminal section; belongs to the binding-protein-dependent transport system permease family. It in the C-terminal section; belongs to the OsmX family. As to quaternary structure, the complex is probably composed of at least an ATP-binding protein (EgtUA) and a transmembrane protein (EgtUBC).

The protein resides in the membrane. In terms of biological role, part of an ABC transporter complex EgtU required for the uptake of ergothioneine (EGT), a natural low-molecular weight (LMW) thiol antioxidant. Responsible for the translocation of the substrate across the membrane. Also contains a C-terminal periplasmic solute-binding domain (SBD) which binds to EGT with sub-micromolar affinity. Probably does not bind L-hercynine. This is Probable ergothioneine transporter EgtUBC (egtUBC) from Staphylococcus aureus (strain USA300).